The primary structure comprises 201 residues: GTP cyclohydrolase 1 (201 aa).

Zn(2+) is bound by residues Cys90, His93, and Cys163.

This sequence belongs to the GTP cyclohydrolase I family. Toroid-shaped homodecamer, composed of two pentamers of five dimers.

It catalyses the reaction GTP + H2O = 7,8-dihydroneopterin 3'-triphosphate + formate + H(+). Its pathway is cofactor biosynthesis; 7,8-dihydroneopterin triphosphate biosynthesis; 7,8-dihydroneopterin triphosphate from GTP: step 1/1. The polypeptide is GTP cyclohydrolase 1 (Streptomyces avermitilis (strain ATCC 31267 / DSM 46492 / JCM 5070 / NBRC 14893 / NCIMB 12804 / NRRL 8165 / MA-4680)).